Consider the following 787-residue polypeptide: (-)-kolavenyl diphosphate synthase, chloroplastic (787 aa).

Residues 1–47 (MSFATSLPRPTTTGAAGFGLPLATCISLSVSHSFSPKFGICNNTSLR) constitute a chloroplast transit peptide. Residue K237 participates in substrate binding. Residues D368 and D370 each contribute to the Mg(2+) site. The DXDD motif signature appears at 368–371 (DSDD). Residue K454 coordinates substrate.

Belongs to the terpene synthase family. Tpsc subfamily. Requires Mg(2+) as cofactor. As to expression, expressed in peltate glandular trichomes of leaves. Highly expressed in the first leaf pair.

It is found in the plastid. It localises to the chloroplast. It catalyses the reaction (2E,6E,10E)-geranylgeranyl diphosphate = (-)-kolavenyl diphosphate. Its activity is regulated as follows. Inhibited by high concentrations of magnesium. Involved in the biosynthesis of clerodane diterpenoids natural products, including salvinorin A with potent agonistic activity on brain kappa-opioid receptors, thus conferring hallucinogenic properties. Diterpene synthase that catalyzes the formation of (-)-kolavenyl diphosphate from geranylgeranyl diphosphate (GGPP) as the first reaction in salvinorin A biosynthesis. This chain is (-)-kolavenyl diphosphate synthase, chloroplastic, found in Salvia divinorum (Maria pastora).